We begin with the raw amino-acid sequence, 425 residues long: Melibiose permease (425 aa).

The Cytoplasmic segment spans residues 1-13; the sequence is MNTTTCTHKDNPN. A helical membrane pass occupies residues 14–34; the sequence is FWIFGLFFFLYFFIMATCFPF. At 35 to 50 the chain is on the periplasmic side; the sequence is LPIWLSDIIGLNKTHT. The chain crosses the membrane as a helical span at residues 51-71; the sequence is GIVFSCISLSAIAFQPVLGVI. Over 72–80 the chain is Cytoplasmic; that stretch reads SDKLGLKKH. The helical transmembrane segment at 81–101 threads the bilayer; sequence LLWIISVLLFLFAPFFLYVFA. Residues 102-107 are Periplasmic-facing; that stretch reads PLLKTN. The chain crosses the membrane as a helical span at residues 108-128; the sequence is IWLGALSGGLYIGFVFSAGSG. The Cytoplasmic segment spans residues 129–149; it reads AIEAYIERVSRNSAFEYGKAR. The chain crosses the membrane as a helical span at residues 150–170; it reads MFGCLGWGLCASTGGILFGID. Position 171 (P171) is a topological domain, periplasmic. The chain crosses the membrane as a helical span at residues 172 to 192; it reads SYVFWMGSAAALLLMLLLVVA. Over 193 to 227 the chain is Cytoplasmic; sequence KPKPNQTAQVMNALGANQPQITAKKVFNLFRQRRM. The chain crosses the membrane as a helical span at residues 228-248; it reads WMFILYVIGVACVYDVFDQQF. Over 249–267 the chain is Periplasmic; it reads ATFFKTFFATPQEGTRAFG. A helical membrane pass occupies residues 268 to 288; the sequence is FATTAGEICNAIIMFCSPWII. At 289 to 297 the chain is on the cytoplasmic side; that stretch reads NRIGAKNTL. The chain crosses the membrane as a helical span at residues 298 to 318; it reads LIAGLIMATRIIGSSFATTAV. The Periplasmic segment spans residues 319–325; it reads EVIALKM. A helical transmembrane segment spans residues 326 to 346; it reads LHALEVPFLLVGAFKYITGVF. Over 347–353 the chain is Cytoplasmic; it reads DTRLSAT. The chain crosses the membrane as a helical span at residues 354–374; that stretch reads IYLIGFQFAKQSAAIFLSAFA. Residues 375 to 385 are Periplasmic-facing; that stretch reads GNMYDRIGFQE. The chain crosses the membrane as a helical span at residues 386 to 406; that stretch reads TYLMLGCFVLAITVVSAFTLS. Topologically, residues 407–425 are cytoplasmic; the sequence is SRQEIAAAAGAAALTSQSR.

Belongs to the major facilitator superfamily. Oligosaccharide:H(+) symporter (OHS) (TC 2.A.1.5) family.

It localises to the cell inner membrane. In terms of biological role, responsible for transport of melibiose into the cell, with the concomitant import of a proton (symport system). Can also transport lactose, and has weak activity with maltose. Cannot transport the analog methyl-1-thio-beta,D-galactopyranoside (TMG). This is Melibiose permease from Enterobacter cloacae subsp. cloacae (strain ATCC 13047 / DSM 30054 / NBRC 13535 / NCTC 10005 / WDCM 00083 / NCDC 279-56).